Consider the following 141-residue polypeptide: Pheromone-binding protein-related protein 6 (141 aa).

The first 16 residues, 1–16 (MVKYPLILLLIGCAAA), serve as a signal peptide directing secretion. Disulfide bonds link C41/C72, C68/C120, and C111/C129.

This sequence belongs to the PBP/GOBP family. In terms of tissue distribution, antenna. Mostly expressed in two types of sensory hairs, sensilla trichodea and small sensilla basiconica, in the ventro-lateral region of the third antennal segment (at protein level).

The protein localises to the secreted. The polypeptide is Pheromone-binding protein-related protein 6 (Obp83b) (Drosophila melanogaster (Fruit fly)).